Reading from the N-terminus, the 548-residue chain is ATP synthase subunit alpha (548 aa).

Residue Gly172–Thr179 coordinates ATP. Residues Ala526–Lys548 form a disordered region.

The protein belongs to the ATPase alpha/beta chains family. In terms of assembly, F-type ATPases have 2 components, CF(1) - the catalytic core - and CF(0) - the membrane proton channel. CF(1) has five subunits: alpha(3), beta(3), gamma(1), delta(1), epsilon(1). CF(0) has three main subunits: a(1), b(2) and c(9-12). The alpha and beta chains form an alternating ring which encloses part of the gamma chain. CF(1) is attached to CF(0) by a central stalk formed by the gamma and epsilon chains, while a peripheral stalk is formed by the delta and b chains.

The protein localises to the cell membrane. It catalyses the reaction ATP + H2O + 4 H(+)(in) = ADP + phosphate + 5 H(+)(out). In terms of biological role, produces ATP from ADP in the presence of a proton gradient across the membrane. The alpha chain is a regulatory subunit. The chain is ATP synthase subunit alpha from Mycolicibacterium gilvum (strain PYR-GCK) (Mycobacterium gilvum (strain PYR-GCK)).